Consider the following 287-residue polypeptide: Small ribosomal subunit biogenesis GTPase RsgA (287 aa).

Residues 63-223 (KNLLIRPKVA…VIDTPGFGSL (161 aa)) enclose the CP-type G domain. Residues 113 to 116 (SKMD) and 166 to 174 (GQSGVGKST) contribute to the GTP site. Residues Cys246, Cys251, His253, and Cys259 each contribute to the Zn(2+) site.

Belongs to the TRAFAC class YlqF/YawG GTPase family. RsgA subfamily. Monomer. Associates with 30S ribosomal subunit, binds 16S rRNA. Zn(2+) serves as cofactor.

It is found in the cytoplasm. One of several proteins that assist in the late maturation steps of the functional core of the 30S ribosomal subunit. Helps release RbfA from mature subunits. May play a role in the assembly of ribosomal proteins into the subunit. Circularly permuted GTPase that catalyzes slow GTP hydrolysis, GTPase activity is stimulated by the 30S ribosomal subunit. This chain is Small ribosomal subunit biogenesis GTPase RsgA, found in Malacoplasma penetrans (strain HF-2) (Mycoplasma penetrans).